The chain runs to 141 residues: Cystatin (141 aa).

An N-terminal signal peptide occupies residues 1 to 26 (MVHSQLPVAAPLRLLCALLLLPSATM). One can recognise a Cystatin domain in the interval 29 to 129 (GGISPRSVTD…CHFQVWSRPW (101 aa)). Residues 73–77 (QVVAG) carry the Secondary area of contact motif. Intrachain disulfides connect Cys-91/Cys-107 and Cys-120/Cys-140.

Belongs to the cystatin family. As to expression, expressed by the venom gland at an extremely low level (at protein level).

The protein resides in the secreted. Functionally, inhibits various C1 cysteine proteases including cathepsin L, papain and cathepsin B. This protein has no toxic activity and its function in the venom is unknown. It may play a role as a housekeeping or regulatory protein. In Oxyuranus microlepidotus (Inland taipan), this protein is Cystatin.